The chain runs to 471 residues: Mixed lineage kinase domain-like protein (471 aa).

The interval 1–149 is N-terminal bundle and brace (NBB); mediates INSP6 binding; it reads MENLKHIITL…DADEDRRAFQ (149 aa). Residues 55-84 are a coiled coil; sequence SEKLTTAMNRFKAALEEANGEIEKFSNRSN. Ser-125 carries the post-translational modification Phosphoserine. Residues 139–180 are a coiled coil; the sequence is QDADEDRRAFQMLRRDNEKIEASLRRLEINMKEIKETLRQYL. The Protein kinase domain occupies 194 to 469; that stretch reads KEIKKEQLSG…DEILKKLSTF (276 aa). Residues 209 to 217 and Lys-230 each bind ATP; that span reads LRENEVSTL. Thr-357 bears the Phosphothreonine; by RIPK3 mark. Ser-358 and Ser-360 each carry phosphoserine; by RIPK3.

Belongs to the protein kinase superfamily. As to quaternary structure, homooligomer. Homotrimer; forms homotrimers on necroptosis induction. Upon TNF-induced necrosis, forms in complex with PGAM5, RIPK1 and RIPK3. Within this complex, may play a role in the proper targeting of RIPK1-RIPK3 to its downstream effector PGAM5. Interacts with RIPK3; the interaction is direct and promotes its phosphorylation and subsequent activation. Post-translationally, phosphorylation by RIPK3 induces a conformational switch that is required for necroptosis. It also induces homotrimerization and localization to the plasma membrane.

Its subcellular location is the cytoplasm. It localises to the cell membrane. The protein localises to the nucleus. Its activity is regulated as follows. Activated via binding to highly phosphorylated inositol phosphates such as inositolhexakisphosphate (InsP6) which mediates the release of an N-terminal auto-inhibitory region. Activation requires not only RIPK3-dependent phosphorylation but also binding to highly phosphorylated inositol phosphates. Inhibited by necrosulfonamide, a specific inhibitor of necroptosis that targets Cys-86. Functionally, pseudokinase that plays a key role in TNF-induced necroptosis, a programmed cell death process. Does not have protein kinase activity. Activated following phosphorylation by RIPK3, leading to homotrimerization, localization to the plasma membrane and execution of programmed necrosis characterized by calcium influx and plasma membrane damage. In addition to TNF-induced necroptosis, necroptosis can also take place in the nucleus in response to orthomyxoviruses infection: following activation by ZBP1, MLKL is phosphorylated by RIPK3 in the nucleus, triggering disruption of the nuclear envelope and leakage of cellular DNA into the cytosol.following ZBP1 activation, which senses double-stranded Z-RNA structures, nuclear RIPK3 catalyzes phosphorylation and activation of MLKL, promoting disruption of the nuclear envelope and leakage of cellular DNA into the cytosol. Binds to highly phosphorylated inositol phosphates such as inositolhexakisphosphate (InsP6) which is essential for its necroptotic function. The polypeptide is Mixed lineage kinase domain-like protein (Homo sapiens (Human)).